The primary structure comprises 84 residues: Toxin Tf2 (84 aa).

The first 20 residues, 1–20, serve as a signal peptide directing secretion; the sequence is MKRFLLFISILMMIGTIVVG. Residues 21–83 form the LCN-type CS-alpha/beta domain; sequence KEGYAMDHEG…VWDYATNKCG (63 aa). Disulfide bonds link Cys-31–Cys-82, Cys-35–Cys-58, Cys-43–Cys-63, and Cys-47–Cys-65. Cys-82 bears the Cysteine amide mark.

The protein belongs to the long (4 C-C) scorpion toxin superfamily. Sodium channel inhibitor family. Beta subfamily. In terms of processing, contains 4 disulfide bonds. In terms of tissue distribution, expressed by the venom gland.

The protein localises to the secreted. Its function is as follows. Beta toxins bind voltage-independently at site-4 of sodium channels (Nav) and shift the voltage of activation toward more negative potentials thereby affecting sodium channel activation and promoting spontaneous and repetitive firing. This toxin is active against hNav1.3/SCN3A. This is Toxin Tf2 from Tityus fasciolatus (Central Brazilian scorpion).